The primary structure comprises 1346 residues: Proline-rich protein 36 (1346 aa).

Disordered stretches follow at residues 1–403 (MDNK…TQLI), 426–512 (SVSS…QATP), 537–606 (PLTT…PSPL), 633–679 (PRQT…VSPL), 711–1155 (LETQ…AELA), and 1168–1240 (PPLA…RSPK). The span at 10-26 (AGAAARTPAARAPGLLT) shows a compositional bias: low complexity. Residues 27–40 (PRPPGSPRPPPPVT) are compositionally biased toward pro residues. 2 stretches are compositionally biased toward low complexity: residues 41–55 (PAALRVLGAAGAVGR) and 86–97 (SSRNPASRPPAS). A compositionally biased stretch (basic and acidic residues) spans 137–152 (SAEETVARGKATEAPK). Positions 165-177 (SGPTPGTPSPAMA) are enriched in low complexity. A compositionally biased stretch (pro residues) spans 191 to 203 (RPAPSARPRPPTE). A compositionally biased stretch (polar residues) spans 208–220 (SVSSASEHSTTEP). Composition is skewed to low complexity over residues 235 to 255 (QRPASRSLSSSATPLSSPARS) and 293 to 312 (APALGPLSSSPLATPSPSGT). 3 stretches are compositionally biased toward pro residues: residues 329–343 (ATLPPSPPVTPPPPA), 371–380 (PLAPPSPSAP), and 387–397 (PSPPATPPSQV). Positions 426-464 (SVSSPLQSMPPTQANPALPSLPTLLSPLATPPLSAMSPL) are enriched in low complexity. Residues 494-506 (TPPPQASPSPSPP) are compositionally biased toward pro residues. The segment covering 546–558 (PPLVSPSLLASPP) has biased composition (low complexity). Pro residues predominate over residues 559-578 (LQAPPHPQAPPSMTTPPMQA). The span at 633–647 (PRQTQASLISPSRPA) shows a compositional bias: polar residues. Pro residues predominate over residues 648-657 (STPPDSPPLQ). A compositionally biased stretch (low complexity) spans 658–679 (APLSLPASPPLQTSLSPAVSPL). The segment covering 724–733 (TPPASLTTPP) has biased composition (polar residues). Composition is skewed to pro residues over residues 781–821 (ETPP…PALA) and 829–865 (PSPPLSPLATPPPQAPPALALPPLQAPPSPPASPPLS). A compositionally biased stretch (low complexity) spans 866–875 (PLATPSPQAP). Composition is skewed to pro residues over residues 887 to 917 (FSPPPSPPVQAPFSPPASPPVSPSATPPSQA), 926 to 997 (LQVP…PPAS), and 1004 to 1015 (AKPPPQAPPALA). Composition is skewed to low complexity over residues 1029–1046 (FPGQAPFSPSASLPMSPL), 1137–1146 (DSGPEGGAAA), and 1224–1239 (GKAAAGAGAGASSRSP). The residue at position 1310 (S1310) is a Phosphoserine.

The sequence is that of Proline-rich protein 36 from Homo sapiens (Human).